The following is a 947-amino-acid chain: MNNKKTATNRKGMIPNRLNKFSIRKYSVGTASILVGTTLIFGLSGHEAKAAEHTNGELNQSKNETTAPSENKTTKKVDSRQLKDNTQTATADQPKVTMSDSATVKETSSNMQSPQNATANQSTTKTSNVTTNDKSSTTYSNETDKSNLTQAKDVSTTPKTTTIKPRTLNRMAVNTVAAPQQGTNVNDKVHFSNIDIAIDKGHVNQTTGKTEFWATSSDVLKLKANYTIDDSVKEGDTFTFKYGQYFRPGSVRLPSQTQNLYNAQGNIIAKGIYDSTTNTTTYTFTNYVDQYTNVRGSFEQVAFAKRKNATTDKTAYKMEVTLGNDTYSEEIIVDYGNKKAQPLISSTNYINNEDLSRNMTAYVNQPKNTYTKQTFVTNLTGYKFNPNAKNFKIYEVTDQNQFVDSFTPDTSKLKDVTDQFDVIYSNDNKTATVDLMKGQTSSNKQYIIQQVAYPDNSSTDNGKIDYTLDTDKTKYSWSNSYSNVNGSSTANGDQKKYNLGDYVWEDTNKDGKQDANEKGIKGVYVILKDSNGKELDRTTTDENGKYQFTGLSNGTYSVEFSTPAGYTPTTANVGTDDAVDSDGLTTTGVIKDADNMTLDSGFYKTPKYSLGDYVWYDSNKDGKQDSTEKGIKGVKVTLQNEKGEVIGTTETDENGKYRFDNLDSGKYKVIFEKPAGLTQTGTNTTEDDKDADGGEVDVTITDHDDFTLDNGYYEEETSDSDSDSDSDSDSDSDSDSDSDSDSDSDSDSDSDSDSDSDSDSDSDSDSNSDSDSDSDSDSDSDSDSDSDSDSDSDSDSDSDSDSDSDSDSDSDSDSDSDSDSDSDSDSDSDSDSDSDSDSDSDSDSDSDSDSDSDSDSDSDSDSDSDSDSDSDSDSDNDSDSDSDSDSDAGKHTPAKPMSTVKDQHKTAKALPETGSENNNSNNGTLFGGLFAALGSLLLFGRRKKQNK.

The first 50 residues, 1 to 50, serve as a signal peptide directing secretion; the sequence is MNNKKTATNRKGMIPNRLNKFSIRKYSVGTASILVGTTLIFGLSGHEAKA. Residues 21 to 32 carry the YSIRK-G/S signaling motif motif; the sequence is FSIRKYSVGTAS. The disordered stretch occupies residues 51–164; the sequence is AEHTNGELNQ…STTPKTTTIK (114 aa). A ligand binding A region region spans residues 51–495; it reads AEHTNGELNQ…GSSTANGDQK (445 aa). Polar residues predominate over residues 56 to 71; sequence GELNQSKNETTAPSEN. Positions 72-83 are enriched in basic and acidic residues; that stretch reads KTTKKVDSRQLK. The segment covering 84 to 155 has biased composition (polar residues); it reads DNTQTATADQ…SNLTQAKDVS (72 aa). 2 consecutive CNA-B domains span residues 496-606 and 607-717; these read KYNL…YKTP and KYSL…EEET. The segment at 678–927 is disordered; the sequence is TQTGTNTTED…NNSNNGTLFG (250 aa). Acidic residues-rich tracts occupy residues 685 to 695 and 712 to 886; these read TEDDKDADGGE and YYEE…DSDS. The LPXTG sorting signal motif lies at 910–914; that stretch reads LPETG. The segment covering 912-927 has biased composition (low complexity); it reads ETGSENNNSNNGTLFG. Pentaglycyl murein peptidoglycan amidated threonine is present on threonine 913. Positions 914–947 are cleaved as a propeptide — removed by sortase; that stretch reads GSENNNSNNGTLFGGLFAALGSLLLFGRRKKQNK.

Belongs to the serine-aspartate repeat-containing protein (SDr) family. As to quaternary structure, homodimerizes; via N2-Domain. Interacts with host NRXN1; this interaction mediates bacterial attachment to host cells.

The protein localises to the secreted. The protein resides in the cell wall. Functionally, cell surface-associated calcium-binding protein which plays an important role in adhesion and pathogenesis. Mediates interactions with components of the extracellular matrix such as host NRXN1 to promote bacterial adhesion. The sequence is that of Serine-aspartate repeat-containing protein C (sdrC) from Staphylococcus aureus (strain Newman).